We begin with the raw amino-acid sequence, 443 residues long: 2-hydroxyethylphosphonate dioxygenase (443 aa).

The HTH cro/C1-type 1 domain maps to 8–63; sequence LAHWMNARKYTAAQTADLAGLPLDDLRRLLGDEANEPDPAAATALAEALSVEPSQL. Residue Lys-16 coordinates substrate. The segment at residues 19 to 38 is a DNA-binding region (H-T-H motif); it reads AAQTADLAGLPLDDLRRLLG. Substrate is bound by residues Tyr-98 and Asn-126. Residue His-129 coordinates Fe cation. 3 residues coordinate substrate: Glu-176, His-182, and Ser-196. His-182 is a Fe cation binding site. The HTH cro/C1-type 2 domain occupies 234–290; it reads VLDLFLARRAHTRTSAAEAAGVPPADLEAALRSPASETGLTVLRTLGRALGFDYRVL. The segment at residues 245–265 is a DNA-binding region (H-T-H motif); it reads TRTSAAEAAGVPPADLEAALR.

The protein belongs to the non-heme iron-dependent dioxygenase family. In terms of assembly, homodimer. Requires Fe(2+) as cofactor.

It carries out the reaction 2-hydroxyethylphosphonate + O2 = hydroxymethylphosphonate + formate + H(+). It participates in secondary metabolite biosynthesis; bialaphos biosynthesis. Its function is as follows. Non-heme-dependent dioxygenase that catalyzes the conversion of 2-hydroxyethylphosphonate (HEP) to hydroxymethylphosphonate (HMP) in the biosynthesis of phosphinothricin tripeptide (PTT), also known as bialaphos (BA), a natural-product antibiotic and potent herbicide. PTT contains the unusual amino acid phosphinothricin attached to 2 alanine residues. Synthetic phosphinothricin (glufosinate) is a key component of commercial herbicides. This Streptomyces viridochromogenes (strain DSM 40736 / JCM 4977 / BCRC 1201 / Tue 494) protein is 2-hydroxyethylphosphonate dioxygenase (hepD).